Here is a 305-residue protein sequence, read N- to C-terminus: UDP-N-acetylenolpyruvoylglucosamine reductase 2 (305 aa).

In terms of domain architecture, FAD-binding PCMH-type spans 33–197; that stretch reads VGGKADVFVA…LEARFELEEG (165 aa). The active site involves arginine 176. Catalysis depends on serine 226, which acts as the Proton donor. Glutamate 296 is an active-site residue.

The protein belongs to the MurB family. The cofactor is FAD.

It localises to the cytoplasm. It carries out the reaction UDP-N-acetyl-alpha-D-muramate + NADP(+) = UDP-N-acetyl-3-O-(1-carboxyvinyl)-alpha-D-glucosamine + NADPH + H(+). It functions in the pathway cell wall biogenesis; peptidoglycan biosynthesis. Functionally, cell wall formation. The sequence is that of UDP-N-acetylenolpyruvoylglucosamine reductase 2 from Bacillus cereus (strain ZK / E33L).